A 331-amino-acid polypeptide reads, in one-letter code: MVKVGINGFGRIGRVVFRAAQMRPDIEIVGINDLLDAEYMAYSLKYDSTHGRFDGTVEVIKGALVVNGKSIRVTSERDPANLKWDEIGVEVVVESTGLFLTQETAHKHIEAGARRVVMTGPPKDDTPMFVMGVNHTTYKGQPIISNASCTTNCLAPLAKVVNEKYGIVEGLMTTVHATTATQKTVDGPSLKDWRGGRGASQNIIPSSTGAPKAVGKVYPALDGKLTGMAFRVPTPNVSVVDLTVRLEKPATYKDICAAIKAAAEGEMKGILGYTDDEVVSSDFNGVALTSVFDVKAGISLNDHFVKLVSWYDNETGYSHKVLDLILHTSAR.

NAD(+) contacts are provided by residues 11 to 12 (RI), Asp-33, and Arg-77. D-glyceraldehyde 3-phosphate contacts are provided by residues 148 to 150 (SCT), Thr-179, 208 to 209 (TG), and Arg-231. Cys-149 (nucleophile) is an active-site residue. Residue Asn-313 coordinates NAD(+).

It belongs to the glyceraldehyde-3-phosphate dehydrogenase family. In terms of assembly, homotetramer.

It is found in the cytoplasm. It carries out the reaction D-glyceraldehyde 3-phosphate + phosphate + NAD(+) = (2R)-3-phospho-glyceroyl phosphate + NADH + H(+). Its pathway is carbohydrate degradation; glycolysis; pyruvate from D-glyceraldehyde 3-phosphate: step 1/5. This chain is Glyceraldehyde-3-phosphate dehydrogenase, cytosolic (GAPC), found in Leishmania mexicana.